The chain runs to 235 residues: MGQKVNPIGLRLGINRTWDSRWFANTNEYGQLLHEDLKIRTYIENELKQAAISKVVIERPHKKCRVTIHSARPGLIIGKKGADIEKLRRKITQMTNAETHLNIVEVRKPEIDARLIAQSIAQQLERRVAFRRAMKRAVQSAMRLGAEGIRINCTGRLGGAEIARIEWYREGRVPLHTLRADIDYGTAEAKTAYGVCGVKVWVFKGEILEHDPMASERRAVEGAGDGGGQRRRENA.

In terms of domain architecture, KH type-2 spans 39 to 107 (IRTYIENELK…ETHLNIVEVR (69 aa)). The interval 215–235 (SERRAVEGAGDGGGQRRRENA) is disordered.

Belongs to the universal ribosomal protein uS3 family. In terms of assembly, part of the 30S ribosomal subunit. Forms a tight complex with proteins S10 and S14.

Functionally, binds the lower part of the 30S subunit head. Binds mRNA in the 70S ribosome, positioning it for translation. The chain is Small ribosomal subunit protein uS3 from Chelativorans sp. (strain BNC1).